Consider the following 189-residue polypeptide: uncharacterized protein (189 aa).

This sequence belongs to the mimivirus R457/R459 family.

It localises to the virion. This is an uncharacterized protein from Acanthamoeba polyphaga mimivirus (APMV).